The chain runs to 983 residues: Glycine dehydrogenase (decarboxylating) (983 aa).

Position 731 is an N6-(pyridoxal phosphate)lysine (K731).

This sequence belongs to the GcvP family. In terms of assembly, the glycine cleavage system is composed of four proteins: P, T, L and H. Pyridoxal 5'-phosphate serves as cofactor.

It carries out the reaction N(6)-[(R)-lipoyl]-L-lysyl-[glycine-cleavage complex H protein] + glycine + H(+) = N(6)-[(R)-S(8)-aminomethyldihydrolipoyl]-L-lysyl-[glycine-cleavage complex H protein] + CO2. Its function is as follows. The glycine cleavage system catalyzes the degradation of glycine. The P protein binds the alpha-amino group of glycine through its pyridoxal phosphate cofactor; CO(2) is released and the remaining methylamine moiety is then transferred to the lipoamide cofactor of the H protein. The polypeptide is Glycine dehydrogenase (decarboxylating) (Nostoc sp. (strain PCC 7120 / SAG 25.82 / UTEX 2576)).